A 295-amino-acid chain; its full sequence is Acetylglutamate kinase (295 aa).

Residues Gly66–Gly67, Arg88, and Asn193 contribute to the substrate site.

The protein belongs to the acetylglutamate kinase family. ArgB subfamily.

Its subcellular location is the cytoplasm. The enzyme catalyses N-acetyl-L-glutamate + ATP = N-acetyl-L-glutamyl 5-phosphate + ADP. Its pathway is amino-acid biosynthesis; L-arginine biosynthesis; N(2)-acetyl-L-ornithine from L-glutamate: step 2/4. Its function is as follows. Catalyzes the ATP-dependent phosphorylation of N-acetyl-L-glutamate. This chain is Acetylglutamate kinase, found in Rhizobium johnstonii (strain DSM 114642 / LMG 32736 / 3841) (Rhizobium leguminosarum bv. viciae).